An 86-amino-acid chain; its full sequence is Co-chaperonin GroES (86 aa).

This sequence belongs to the GroES chaperonin family. Heptamer of 7 subunits arranged in a ring. Interacts with the chaperonin GroEL.

The protein resides in the cytoplasm. In terms of biological role, together with the chaperonin GroEL, plays an essential role in assisting protein folding. The GroEL-GroES system forms a nano-cage that allows encapsulation of the non-native substrate proteins and provides a physical environment optimized to promote and accelerate protein folding. GroES binds to the apical surface of the GroEL ring, thereby capping the opening of the GroEL channel. This is Co-chaperonin GroES from Campylobacter concisus (strain 13826).